Here is a 481-residue protein sequence, read N- to C-terminus: Cysteine--tRNA ligase (481 aa).

Zn(2+) is bound at residue Cys29. The short motif at 31–41 (PTVYDYSHLGH) is the 'HIGH' region element. The Zn(2+) site is built by Cys210, His235, and Glu239. Positions 272-276 (KMSKS) match the 'KMSKS' region motif. Lys275 is an ATP binding site.

Belongs to the class-I aminoacyl-tRNA synthetase family. Monomer. The cofactor is Zn(2+).

Its subcellular location is the cytoplasm. It catalyses the reaction tRNA(Cys) + L-cysteine + ATP = L-cysteinyl-tRNA(Cys) + AMP + diphosphate. This chain is Cysteine--tRNA ligase, found in Anaeromyxobacter dehalogenans (strain 2CP-C).